The following is a 339-amino-acid chain: Fructose-1,6-bisphosphatase isozyme 2 (339 aa).

An important for interaction with ALDOA region spans residues 3–10; sequence DRSPFETD. AMP is bound by residues V18 and 28–32; that span reads TGELT. Mg(2+)-binding residues include D69 and E98. Residue 113-114 coordinates AMP; that stretch reads KY. D119, L121, and D122 together coordinate Mg(2+). Position 122 (D122) interacts with substrate. Position 141 (R141) interacts with AMP. The short motif at 204-208 is the Nuclear localization signal element; sequence KKKGK. Residue 213–216 coordinates substrate; sequence NEGY. 2 positions are modified to phosphotyrosine: Y216 and Y219. Substrate contacts are provided by residues 245–249, Y265, and K275; that span reads YVGSM. Position 281 (E281) interacts with Mg(2+).

Belongs to the FBPase class 1 family. In terms of assembly, homotetramer. Interacts with ALDOA; the interaction blocks inhibition by physiological concentrations of AMP and reduces inhibition by Ca(2+). Interacts with alpha-actinin and F-actin. Requires Mg(2+) as cofactor.

The protein resides in the cell junction. The protein localises to the cytoplasm. Its subcellular location is the nucleus. It localises to the myofibril. It is found in the sarcomere. The protein resides in the z line. It carries out the reaction beta-D-fructose 1,6-bisphosphate + H2O = beta-D-fructose 6-phosphate + phosphate. It functions in the pathway carbohydrate biosynthesis; gluconeogenesis. With respect to regulation, subject to complex allosteric regulation. The enzyme can assume an active R-state, or an inactive T-state. Intermediate conformations may exist. AMP acts as an allosteric inhibitor. Fructose 2,6-bisphosphate acts as a competitive inhibitor. Strongly inhibited by Ca(2+). Functionally, catalyzes the hydrolysis of fructose 1,6-bisphosphate to fructose 6-phosphate in the presence of divalent cations and probably participates in glycogen synthesis from carbohydrate precursors, such as lactate. The polypeptide is Fructose-1,6-bisphosphatase isozyme 2 (FBP2) (Oryctolagus cuniculus (Rabbit)).